Here is an 86-residue protein sequence, read N- to C-terminus: FVNKHLCGSHLVDALYLVCGDRGFFYTPMAXXELEDPQVGQADPGVVPEAGRLQPLALEMTLQXXGIVDQCCTSICTLYQLENYCN.

Cystine bridges form between Cys7-Cys72, Cys19-Cys85, and Cys71-Cys76. Positions 33-63 (ELEDPQVGQADPGVVPEAGRLQPLALEMTLQ) are cleaved as a propeptide — c peptide.

Belongs to the insulin family. As to quaternary structure, heterodimer of a B chain and an A chain linked by two disulfide bonds.

It is found in the secreted. Its function is as follows. Insulin decreases blood glucose concentration. It increases cell permeability to monosaccharides, amino acids and fatty acids. It accelerates glycolysis, the pentose phosphate cycle, and glycogen synthesis in liver. In Chinchilla chinchilla (Short-tailed chinchilla), this protein is Insulin (INS).